The chain runs to 424 residues: Glutamate-1-semialdehyde 2,1-aminomutase (424 aa).

Lys263 is subject to N6-(pyridoxal phosphate)lysine.

This sequence belongs to the class-III pyridoxal-phosphate-dependent aminotransferase family. HemL subfamily. As to quaternary structure, homodimer. Pyridoxal 5'-phosphate is required as a cofactor.

It localises to the cytoplasm. The catalysed reaction is (S)-4-amino-5-oxopentanoate = 5-aminolevulinate. It functions in the pathway porphyrin-containing compound metabolism; protoporphyrin-IX biosynthesis; 5-aminolevulinate from L-glutamyl-tRNA(Glu): step 2/2. This Campylobacter jejuni subsp. jejuni serotype O:6 (strain 81116 / NCTC 11828) protein is Glutamate-1-semialdehyde 2,1-aminomutase.